The primary structure comprises 213 residues: Uridine kinase (213 aa).

15-22 (GASASGKS) is an ATP binding site.

It belongs to the uridine kinase family.

Its subcellular location is the cytoplasm. The enzyme catalyses uridine + ATP = UMP + ADP + H(+). The catalysed reaction is cytidine + ATP = CMP + ADP + H(+). It participates in pyrimidine metabolism; CTP biosynthesis via salvage pathway; CTP from cytidine: step 1/3. It functions in the pathway pyrimidine metabolism; UMP biosynthesis via salvage pathway; UMP from uridine: step 1/1. The protein is Uridine kinase of Escherichia fergusonii (strain ATCC 35469 / DSM 13698 / CCUG 18766 / IAM 14443 / JCM 21226 / LMG 7866 / NBRC 102419 / NCTC 12128 / CDC 0568-73).